The sequence spans 408 residues: LL-diaminopimelate aminotransferase (408 aa).

Substrate contacts are provided by Tyr15 and Gly42. Pyridoxal 5'-phosphate contacts are provided by residues Tyr72, 108–109 (SK), Tyr132, Asn187, Tyr218, and 246–248 (SFS). Substrate-binding residues include Lys109, Tyr132, and Asn187. N6-(pyridoxal phosphate)lysine is present on Lys249. Residues Arg257 and Asn292 each coordinate pyridoxal 5'-phosphate. Residues Asn292 and Arg388 each contribute to the substrate site.

The protein belongs to the class-I pyridoxal-phosphate-dependent aminotransferase family. LL-diaminopimelate aminotransferase subfamily. As to quaternary structure, homodimer. Requires pyridoxal 5'-phosphate as cofactor.

The enzyme catalyses (2S,6S)-2,6-diaminopimelate + 2-oxoglutarate = (S)-2,3,4,5-tetrahydrodipicolinate + L-glutamate + H2O + H(+). It participates in amino-acid biosynthesis; L-lysine biosynthesis via DAP pathway; LL-2,6-diaminopimelate from (S)-tetrahydrodipicolinate (aminotransferase route): step 1/1. Functionally, involved in the synthesis of meso-diaminopimelate (m-DAP or DL-DAP), required for both lysine and peptidoglycan biosynthesis. Catalyzes the direct conversion of tetrahydrodipicolinate to LL-diaminopimelate. In Prochlorococcus marinus (strain MIT 9515), this protein is LL-diaminopimelate aminotransferase.